Consider the following 87-residue polypeptide: Large ribosomal subunit protein bL31B (87 aa).

This sequence belongs to the bacterial ribosomal protein bL31 family. Type B subfamily. As to quaternary structure, part of the 50S ribosomal subunit.

The protein is Large ribosomal subunit protein bL31B of Burkholderia multivorans (strain ATCC 17616 / 249).